We begin with the raw amino-acid sequence, 113 residues long: uncharacterized protein (113 aa).

The signal sequence occupies residues 1–29; the sequence is MLVVYMCIWVLYLLLFLFLFLFIASPASL. Transmembrane regions (helical) follow at residues 34 to 54 and 56 to 76; these read THIL…CAFF and QVLC…FYFF.

Its subcellular location is the membrane. This is an uncharacterized protein from Saccharomyces cerevisiae (strain ATCC 204508 / S288c) (Baker's yeast).